A 210-amino-acid chain; its full sequence is Thiamine-phosphate synthase (210 aa).

Residues 38-42 (QFREK) and Asn70 each bind 4-amino-2-methyl-5-(diphosphooxymethyl)pyrimidine. The Mg(2+) site is built by Asp71 and Asp90. Ser107 is a 4-amino-2-methyl-5-(diphosphooxymethyl)pyrimidine binding site. 132 to 134 (TKT) lines the 2-[(2R,5Z)-2-carboxy-4-methylthiazol-5(2H)-ylidene]ethyl phosphate pocket. A 4-amino-2-methyl-5-(diphosphooxymethyl)pyrimidine-binding site is contributed by Lys135. 183–184 (IS) serves as a coordination point for 2-[(2R,5Z)-2-carboxy-4-methylthiazol-5(2H)-ylidene]ethyl phosphate.

Belongs to the thiamine-phosphate synthase family. It depends on Mg(2+) as a cofactor.

The enzyme catalyses 2-[(2R,5Z)-2-carboxy-4-methylthiazol-5(2H)-ylidene]ethyl phosphate + 4-amino-2-methyl-5-(diphosphooxymethyl)pyrimidine + 2 H(+) = thiamine phosphate + CO2 + diphosphate. The catalysed reaction is 2-(2-carboxy-4-methylthiazol-5-yl)ethyl phosphate + 4-amino-2-methyl-5-(diphosphooxymethyl)pyrimidine + 2 H(+) = thiamine phosphate + CO2 + diphosphate. It catalyses the reaction 4-methyl-5-(2-phosphooxyethyl)-thiazole + 4-amino-2-methyl-5-(diphosphooxymethyl)pyrimidine + H(+) = thiamine phosphate + diphosphate. It functions in the pathway cofactor biosynthesis; thiamine diphosphate biosynthesis; thiamine phosphate from 4-amino-2-methyl-5-diphosphomethylpyrimidine and 4-methyl-5-(2-phosphoethyl)-thiazole: step 1/1. In terms of biological role, condenses 4-methyl-5-(beta-hydroxyethyl)thiazole monophosphate (THZ-P) and 2-methyl-4-amino-5-hydroxymethyl pyrimidine pyrophosphate (HMP-PP) to form thiamine monophosphate (TMP). The chain is Thiamine-phosphate synthase from Archaeoglobus fulgidus (strain ATCC 49558 / DSM 4304 / JCM 9628 / NBRC 100126 / VC-16).